The following is a 489-amino-acid chain: Ribulose bisphosphate carboxylase large chain 2 (489 aa).

Positions 128 and 178 each coordinate substrate. Residue K180 is the Proton acceptor of the active site. K182 is a substrate binding site. Mg(2+) contacts are provided by K206, D208, and E209. K206 carries the N6-carboxylysine modification. H298 (proton acceptor) is an active-site residue. Residues R299, H331, and S383 each coordinate substrate.

The protein belongs to the RuBisCO large chain family. Type I subfamily. As to quaternary structure, heterohexadecamer of 8 large chains and 8 small chains. Mg(2+) serves as cofactor.

It carries out the reaction 2 (2R)-3-phosphoglycerate + 2 H(+) = D-ribulose 1,5-bisphosphate + CO2 + H2O. The enzyme catalyses D-ribulose 1,5-bisphosphate + O2 = 2-phosphoglycolate + (2R)-3-phosphoglycerate + 2 H(+). Functionally, ruBisCO catalyzes two reactions: the carboxylation of D-ribulose 1,5-bisphosphate, the primary event in carbon dioxide fixation, as well as the oxidative fragmentation of the pentose substrate. Both reactions occur simultaneously and in competition at the same active site. The protein is Ribulose bisphosphate carboxylase large chain 2 of Nitrobacter winogradskyi (strain ATCC 25391 / DSM 10237 / CIP 104748 / NCIMB 11846 / Nb-255).